A 691-amino-acid chain; its full sequence is Elongation factor G (691 aa).

A tr-type G domain is found at 8-282 (ERVRNIGIAA…AVVDYLPAPV (275 aa)). Residues 17 to 24 (AHIDAGKT), 81 to 85 (DTPGH), and 135 to 138 (NKMD) contribute to the GTP site.

The protein belongs to the TRAFAC class translation factor GTPase superfamily. Classic translation factor GTPase family. EF-G/EF-2 subfamily.

It is found in the cytoplasm. In terms of biological role, catalyzes the GTP-dependent ribosomal translocation step during translation elongation. During this step, the ribosome changes from the pre-translocational (PRE) to the post-translocational (POST) state as the newly formed A-site-bound peptidyl-tRNA and P-site-bound deacylated tRNA move to the P and E sites, respectively. Catalyzes the coordinated movement of the two tRNA molecules, the mRNA and conformational changes in the ribosome. The protein is Elongation factor G of Prochlorococcus marinus (strain MIT 9312).